The chain runs to 193 residues: Thymidine kinase (193 aa).

ATP contacts are provided by residues 16–23 (GPMFSGKS) and 89–92 (DEIQ). The active-site Proton acceptor is the Glu90. The Zn(2+) site is built by Cys146, Cys149, Cys184, and Cys187.

This sequence belongs to the thymidine kinase family. In terms of assembly, homotetramer.

It localises to the cytoplasm. The catalysed reaction is thymidine + ATP = dTMP + ADP + H(+). This chain is Thymidine kinase, found in Caldanaerobacter subterraneus subsp. tengcongensis (strain DSM 15242 / JCM 11007 / NBRC 100824 / MB4) (Thermoanaerobacter tengcongensis).